The following is a 204-amino-acid chain: uncharacterized protein (204 aa).

Disordered stretches follow at residues 1–37 and 159–204; these read MRAL…GSVS and GYRP…DGEL. Residues 28-37 are compositionally biased toward low complexity; sequence GRGPRAGSVS. A WGR domain is found at 88 to 175; sequence PYRLYVERLD…LPKEKWPAEA (88 aa). Composition is skewed to basic and acidic residues over residues 166–179 and 188–204; these read LPKE…EHES and PEGH…DGEL.

This is an uncharacterized protein from Sinorhizobium fredii (strain NBRC 101917 / NGR234).